Reading from the N-terminus, the 540-residue chain is Homoserine O-acetyltransferase (540 aa).

One can recognise an AB hydrolase-1 domain in the interval 66-404 (NVILICHALT…QHGHDAFLLE (339 aa)). The Nucleophile role is filled by Ser-171. Substrate is bound at residue Arg-240. The tract at residues 262–284 (QDTDKSGIKGTTGTEGKNSSEIS) is disordered. Catalysis depends on residues Asp-365 and His-398. Asp-399 is a binding site for substrate. 2 consecutive CBS domains span residues 425–484 (MNRN…ELDE) and 486–540 (ITRD…GKYD).

It belongs to the AB hydrolase superfamily. MetX family. Homodimer.

Its subcellular location is the cytoplasm. The enzyme catalyses L-homoserine + acetyl-CoA = O-acetyl-L-homoserine + CoA. The protein operates within amino-acid biosynthesis; L-methionine biosynthesis via de novo pathway; O-acetyl-L-homoserine from L-homoserine: step 1/1. Its function is as follows. Transfers an acetyl group from acetyl-CoA to L-homoserine, forming acetyl-L-homoserine. In vitro, can also use propionyl-CoA or butiryl-CoA as acyl donor. The polypeptide is Homoserine O-acetyltransferase (Methanosarcina acetivorans (strain ATCC 35395 / DSM 2834 / JCM 12185 / C2A)).